The primary structure comprises 415 residues: Adenosylhomocysteinase (415 aa).

Substrate is bound by residues T53, D124, and E147. 148–150 (TTT) contributes to the NAD(+) binding site. Substrate contacts are provided by K177 and D181. NAD(+) contacts are provided by residues N182, 211–216 (GYGWVG), E234, N269, 290–292 (SGH), and N337.

The protein belongs to the adenosylhomocysteinase family. It depends on NAD(+) as a cofactor.

The protein localises to the cytoplasm. The enzyme catalyses S-adenosyl-L-homocysteine + H2O = L-homocysteine + adenosine. Its pathway is amino-acid biosynthesis; L-homocysteine biosynthesis; L-homocysteine from S-adenosyl-L-homocysteine: step 1/1. Its function is as follows. May play a key role in the regulation of the intracellular concentration of adenosylhomocysteine. This chain is Adenosylhomocysteinase, found in Sulfurisphaera tokodaii (strain DSM 16993 / JCM 10545 / NBRC 100140 / 7) (Sulfolobus tokodaii).